The chain runs to 214 residues: Small ribosomal subunit protein uS2 (214 aa).

The protein belongs to the universal ribosomal protein uS2 family.

This Thermofilum pendens (strain DSM 2475 / Hrk 5) protein is Small ribosomal subunit protein uS2.